A 286-amino-acid polypeptide reads, in one-letter code: ATP synthase gamma chain (286 aa).

Belongs to the ATPase gamma chain family. In terms of assembly, F-type ATPases have 2 components, CF(1) - the catalytic core - and CF(0) - the membrane proton channel. CF(1) has five subunits: alpha(3), beta(3), gamma(1), delta(1), epsilon(1). CF(0) has three main subunits: a, b and c.

It is found in the cell inner membrane. In terms of biological role, produces ATP from ADP in the presence of a proton gradient across the membrane. The gamma chain is believed to be important in regulating ATPase activity and the flow of protons through the CF(0) complex. In Shewanella denitrificans (strain OS217 / ATCC BAA-1090 / DSM 15013), this protein is ATP synthase gamma chain.